Here is an 898-residue protein sequence, read N- to C-terminus: Serine/threonine-protein kinase TAO3 (898 aa).

In terms of domain architecture, Protein kinase spans 24–277 (FIGLHEIGHG…SAELLRHDFV (254 aa)). ATP-binding positions include 30 to 38 (IGHGSFGAV) and Lys53. The active-site Proton acceptor is the Asp147. 2 disordered regions span residues 316–362 (TRNG…SQSS) and 405–425 (DEAGHGDPRPEPRPTQSVQSQ). Ser324 carries the phosphoserine; by ATM modification. Residues Ser331, Ser343, Ser346, and Ser349 each carry the phosphoserine modification. Positions 334-351 (GTSLNREMDSLGSNHSIP) are enriched in polar residues. Low complexity predominate over residues 352–362 (SMSVSTGSQSS). Position 357 is a phosphothreonine (Thr357). Ser359 carries the post-translational modification Phosphoserine. The span at 405–416 (DEAGHGDPRPEP) shows a compositional bias: basic and acidic residues. Ser442 bears the Phosphoserine mark. Coiled-coil stretches lie at residues 452-502 (EQEN…THAN), 548-649 (FLES…HAML), and 754-879 (LKTL…DMES). Positions 565-596 (EEMNEDHSTPKKEKQERISKHKENLQHTQAEE) are disordered. N6-acetyllysine is present on Lys830.

It belongs to the protein kinase superfamily. STE Ser/Thr protein kinase family. STE20 subfamily. In terms of assembly, self-associates. Interacts with ERN1 and TRAF2. Interaction with TRAF2 is facilitated under ER stress conditions, such as treatment with tunicamycin, and may promote TRAF2 phosphorylation. Interacts (via N-terminus) with STK25; the interaction promotes STK25 abundance at the level of protein expression and/or stability. Post-translationally, autophosphorylated. Phosphorylation at Ser-324 by ATM following DNA damage is required for activation of the p38/MAPK14 stress-activated MAPK cascade. Phosphorylated at Ser-324 and on Tyr residues during T cell activation. Phosphorylated by LRRK2.

The protein resides in the cytoplasm. Its subcellular location is the cell membrane. It localises to the membrane raft. It is found in the lipid droplet. The enzyme catalyses L-seryl-[protein] + ATP = O-phospho-L-seryl-[protein] + ADP + H(+). The catalysed reaction is L-threonyl-[protein] + ATP = O-phospho-L-threonyl-[protein] + ADP + H(+). In terms of biological role, serine/threonine-protein kinase that acts as a regulator of the p38/MAPK14 stress-activated MAPK cascade and of the MAPK8/JNK cascade. In response to DNA damage, involved in the G2/M transition DNA damage checkpoint by activating the p38/MAPK14 stress-activated MAPK cascade, probably by mediating phosphorylation of upstream MAP2K3 and MAP2K6 kinases. Inhibits basal activity of the MAPK8/JNK cascade and diminishes its activation in response to epidermal growth factor (EGF). Positively regulates canonical T cell receptor (TCR) signaling by preventing early PTPN6/SHP1-mediated inactivation of LCK, ensuring sustained TCR signaling that is required for optimal activation and differentiation of T cells. Phosphorylates PTPN6/SHP1 on 'Thr-394', leading to its polyubiquitination and subsequent proteasomal degradation. Required for cell surface expression of metalloprotease ADAM10 on type 1 transitional B cells which is necessary for their NOTCH-mediated development into marginal zone B cells. Also required for the NOTCH-mediated terminal differentiation of splenic conventional type 2 dendritic cells. Positively regulates osteoblast differentiation by acting as an upstream activator of the JNK pathway. Promotes JNK signaling in hepatocytes and positively regulates hepatocyte lipid storage by inhibiting beta-oxidation and triacylglycerol secretion while enhancing lipid synthesis. Restricts age-associated inflammation by negatively regulating differentiation of macrophages and their production of pro-inflammatory cytokines. Plays a role in negatively regulating the abundance of regulatory T cells in white adipose tissue. The protein is Serine/threonine-protein kinase TAO3 (TAOK3) of Pongo abelii (Sumatran orangutan).